The primary structure comprises 216 residues: UDP-N-acetylglucosamine transferase subunit ALG14 (216 aa).

At 1-3 (MVC) the chain is on the lumenal side. Residues 4-24 (VLVLAAAAGAVAVFLILRIWV) traverse the membrane as a helical segment. Residues 25-216 (VLRSMDVTPR…PKSVYLGRIV (192 aa)) lie on the Cytoplasmic side of the membrane.

This sequence belongs to the ALG14 family. As to quaternary structure, forms with ALG13 the active heterodimeric UDP-N-acetylglucosamine transferase complex.

It localises to the endoplasmic reticulum membrane. In terms of biological role, part of the UDP-N-acetylglucosamine transferase complex that operates in the biosynthetic pathway of dolichol-linked oligosaccharides, the glycan precursors employed in protein asparagine (N)-glycosylation. The assembly of dolichol-linked oligosaccharides begins on the cytosolic side of the endoplasmic reticulum membrane and finishes in its lumen. The sequential addition of sugars to dolichol pyrophosphate produces dolichol-linked oligosaccharides containing fourteen sugars, including two GlcNAcs, nine mannoses and three glucoses. Once assembled, the oligosaccharides are transferred from the lipid to nascent proteins by oligosaccharyltransferases. Functions as a protein-membrane adapter recruiting ALG13 at the cytoplasmic face of the endoplasmic reticulum, where the complex catalyzes the second step of dolichol pyrophosphate biosynthesis, transferring a beta1,4-linked N-acetylglucosamine (GlcNAc) from UDP-GlcNAc to GlcNAc-pyrophosphatedolichol (Gn-PDol) to produce N,N'-diacetylchitobiosyl diphosphodolichol. N,N'-diacetylchitobiosyl diphosphodolichol is a substrate for ALG1, the following enzyme in the biosynthetic pathway. This is UDP-N-acetylglucosamine transferase subunit ALG14 from Homo sapiens (Human).